The chain runs to 396 residues: Elongation factor Tu (396 aa).

One can recognise a tr-type G domain in the interval 10-205; it reads KSHANIGTIG…AVDEYIPTPE (196 aa). The segment at 19-26 is G1; the sequence is GHVDHGKT. Residue 19 to 26 participates in GTP binding; the sequence is GHVDHGKT. Thr-26 is a Mg(2+) binding site. The interval 61–65 is G2; it reads GITIS. Residues 82-85 are G3; sequence DCPG. GTP-binding positions include 82–86 and 137–140; these read DCPGH and NKCD. Positions 137–140 are G4; that stretch reads NKCD. Residues 175 to 177 are G5; that stretch reads SAL.

The protein belongs to the TRAFAC class translation factor GTPase superfamily. Classic translation factor GTPase family. EF-Tu/EF-1A subfamily. Monomer.

It is found in the cytoplasm. The enzyme catalyses GTP + H2O = GDP + phosphate + H(+). Functionally, GTP hydrolase that promotes the GTP-dependent binding of aminoacyl-tRNA to the A-site of ribosomes during protein biosynthesis. This Bacillus licheniformis (strain ATCC 14580 / DSM 13 / JCM 2505 / CCUG 7422 / NBRC 12200 / NCIMB 9375 / NCTC 10341 / NRRL NRS-1264 / Gibson 46) protein is Elongation factor Tu.